Reading from the N-terminus, the 796-residue chain is DNA damage-responsive transcriptional repressor RPH1 (796 aa).

One can recognise a JmjN domain in the interval 14-55; the sequence is VPVFKPTYEQFEDFYAYCKAINKYGMKSGVVKVIPPKEWKDK. The JmjC domain occupies 193 to 355; sequence PEGLNVWNVA…IGKKAGKCHC (163 aa). Phosphothreonine is present on T399. Residues S430, S459, S557, S561, S575, and S584 each carry the phosphoserine modification. The short motif at 455–471 is the Bipartite nuclear localization signal element; sequence KRISSFQEQPLNKLLKR. The segment at 599 to 692 is disordered; sequence RQQHSQQHSF…DKEQGSSPLN (94 aa). Residues 601–621 show a composition bias toward polar residues; the sequence is QHSQQHSFSTPSTVSNLSTSV. Positions 629–640 are enriched in basic and acidic residues; the sequence is NDIKTPHPERPN. The residue at position 652 (S652) is a Phosphoserine. Over residues 654–669 the composition is skewed to polar residues; it reads VETSKSNLILSKVAST. Over residues 670-686 the composition is skewed to basic and acidic residues; the sequence is RQEDSFTSRNDDLDKEQ. S689 is subject to Phosphoserine. The C2H2-type 1 zinc-finger motif lies at 709–732; sequence YICKECQRKFSSGHHLTRHKKSVH. The segment at 738–763 adopts a C2H2-type 2; atypical zinc-finger fold; that stretch reads HSCPKCGKRFKRRDHVLQHLNKKIPC. Residues 774 to 796 are disordered; that stretch reads IMNPTVQPQDGKAAINQQSTPLN.

In terms of processing, RAD53-dependent phosphorylated in response to DNA damage.

The protein resides in the nucleus. In terms of biological role, transcriptional repressor of photolyase PHR1. Recognizes and binds the sequence AG(4) in the upstream repressing sequence of PHR1. Derepresses PHR1 transcription when phosphorylated. The polypeptide is DNA damage-responsive transcriptional repressor RPH1 (RPH1) (Saccharomyces cerevisiae (strain ATCC 204508 / S288c) (Baker's yeast)).